The primary structure comprises 393 residues: Actin-related protein 2 (393 aa).

Residues 158-160, 212-216, and 303-308 contribute to the ATP site; these read GDG, RQMKE, and GGTTMY.

It belongs to the actin family. ARP2 subfamily. In terms of assembly, component of the Arp2/3 complex.

It is found in the cytoplasm. The protein localises to the cytoskeleton. Functions as ATP-binding component of the Arp2/3 complex which is involved in regulation of actin polymerization and together with an activating nucleation-promoting factor (NPF) mediates the formation of branched actin networks. Seems to contact the pointed end of the daughter actin filament. This chain is Actin-related protein 2 (arx-2), found in Caenorhabditis briggsae.